Reading from the N-terminus, the 617-residue chain is 5-hydroxytryptamine receptor 2B (617 aa).

Over 1 to 95 the chain is Extracellular; it reads MLKTVTTAMA…LLVKMIAMAV (95 aa). N-linked (GlcNAc...) asparagine glycans are attached at residues Asn31, Asn41, Asn51, and Asn58. The helical transmembrane segment at 96 to 116 threads the bilayer; sequence VLGLMILVTIIGNVFVIAAII. Residues 117-128 are Cytoplasmic-facing; that stretch reads LERNLQNVANYL. Residues 129 to 149 traverse the membrane as a helical segment; sequence VASLAVADLFVACLVMPLGAV. Residues 150 to 164 lie on the Extracellular side of the membrane; sequence YEISNGWILGPELCD. Cys163 and Cys242 are disulfide-bonded. A helical membrane pass occupies residues 165-185; it reads IWTSCDVLCCTASILHLVAIA. Residues 186-205 lie on the Cytoplasmic side of the membrane; the sequence is ADRYWTVTNIDYNNLRTPRR. Residues 206-226 traverse the membrane as a helical segment; that stretch reads VFLMIFCVWFAALIVSLAPQF. The Extracellular portion of the chain corresponds to 227 to 256; that stretch reads GWKDPDYMKRIEEQHCMVSQDVGYQIFATC. Residues 257-277 form a helical membrane-spanning segment; sequence CTFYVPLLVILFLYWKIYIIA. Topologically, residues 278–534 are cytoplasmic; it reads RKRIQRRAQK…EAKRERKAAQ (257 aa). The interval 309–336 is disordered; sequence RSKRRAERKRLEAGERTPVDGDGTGGQL. Residues 317–327 show a composition bias toward basic and acidic residues; the sequence is KRLEAGERTPV. Residues 535 to 555 traverse the membrane as a helical segment; that stretch reads TLAIITGAFVICWLPFFVMAL. The Extracellular segment spans residues 556 to 570; that stretch reads TMSLCKECEIHTAVA. Residues 571-591 traverse the membrane as a helical segment; the sequence is SLFLWLGYFNSTLNPVIYTIF. Topologically, residues 592-617 are cytoplasmic; sequence NPEFRRAFKRILFGRKAAARARSAKI.

Belongs to the G-protein coupled receptor 1 family.

Its subcellular location is the cell membrane. Functionally, this is one of the several different receptors for 5-hydroxytryptamine (serotonin), a biogenic hormone that functions as a neurotransmitter, a hormone, and a mitogen. The activity of this receptor is mediated by G proteins which inhibit adenylate cyclase. This chain is 5-hydroxytryptamine receptor 2B (5-HT1B), found in Drosophila melanogaster (Fruit fly).